The sequence spans 570 residues: Sulfite reductase [NADPH] hemoprotein beta-component (570 aa).

4 residues coordinate [4Fe-4S] cluster: Cys-434, Cys-440, Cys-479, and Cys-483. Residue Cys-483 participates in siroheme binding.

It belongs to the nitrite and sulfite reductase 4Fe-4S domain family. Alpha(8)-beta(8). The alpha component is a flavoprotein, the beta component is a hemoprotein. It depends on siroheme as a cofactor. The cofactor is [4Fe-4S] cluster.

The catalysed reaction is hydrogen sulfide + 3 NADP(+) + 3 H2O = sulfite + 3 NADPH + 4 H(+). Its pathway is sulfur metabolism; hydrogen sulfide biosynthesis; hydrogen sulfide from sulfite (NADPH route): step 1/1. Component of the sulfite reductase complex that catalyzes the 6-electron reduction of sulfite to sulfide. This is one of several activities required for the biosynthesis of L-cysteine from sulfate. This Escherichia coli O17:K52:H18 (strain UMN026 / ExPEC) protein is Sulfite reductase [NADPH] hemoprotein beta-component.